Here is a 390-residue protein sequence, read N- to C-terminus: Tuftelin (390 aa).

2 coiled-coil regions span residues 88–126 (DKMTHEKNIDQLKSEVQYIQEARNCLQKLREDISSKLDR) and 163–352 (PSMS…EKQV). A disordered region spans residues 356 to 383 (NFSTQARAKTENLGSVRISKPPSPKPMP).

It belongs to the tuftelin family. As to quaternary structure, interacts with TFIP11. May form oligomers. As to expression, ameloblasts, and also non-odontogenic tissues including kidney, lung, liver and testis.

The protein localises to the secreted. Functionally, involved in the structural organization of the epidermis. Involved in the mineralization and structural organization of enamel. The protein is Tuftelin (Tuft1) of Mus musculus (Mouse).